Consider the following 302-residue polypeptide: Sulfate adenylyltransferase subunit 2 (302 aa).

It belongs to the PAPS reductase family. CysD subfamily. Heterodimer composed of CysD, the smaller subunit, and CysN.

It carries out the reaction sulfate + ATP + H(+) = adenosine 5'-phosphosulfate + diphosphate. It participates in sulfur metabolism; hydrogen sulfide biosynthesis; sulfite from sulfate: step 1/3. In terms of biological role, with CysN forms the ATP sulfurylase (ATPS) that catalyzes the adenylation of sulfate producing adenosine 5'-phosphosulfate (APS) and diphosphate, the first enzymatic step in sulfur assimilation pathway. APS synthesis involves the formation of a high-energy phosphoric-sulfuric acid anhydride bond driven by GTP hydrolysis by CysN coupled to ATP hydrolysis by CysD. This chain is Sulfate adenylyltransferase subunit 2, found in Escherichia coli O6:K15:H31 (strain 536 / UPEC).